A 117-amino-acid polypeptide reads, in one-letter code: Large ribosomal subunit protein bL19 (117 aa).

Belongs to the bacterial ribosomal protein bL19 family.

Functionally, this protein is located at the 30S-50S ribosomal subunit interface and may play a role in the structure and function of the aminoacyl-tRNA binding site. The protein is Large ribosomal subunit protein bL19 of Shewanella baltica (strain OS155 / ATCC BAA-1091).